The following is a 199-amino-acid chain: MFIRTENFQTFIRLYPVVTFILALQAVLWLFFSLPAHSVVLWRDTVTGYNLGVANGEWWRLITPILLHAGFTHLLFNSMSIFLFAPALERMLGKARFLLVYAGSGIIGNIGTYVTEPLDYVHVGASGAIFGLFGVYLFMVLFRNELIGQEHSKMIITLLAFAVLMSFINSNINMMAHLFGLCGGFLLSFLCVQKKERRY.

The next 6 helical transmembrane spans lie at 14–34 (LYPV…FFSL), 65–85 (ILLH…FLFA), 97–117 (FLLV…VTEP), 122–142 (HVGA…MVLF), 147–167 (IGQE…LMSF), and 172–192 (INMM…FLCV). The active-site Nucleophile is the serine 126. The active-site Charge relay system is histidine 177.

It belongs to the peptidase S54 family.

The protein resides in the cell membrane. The chain is Putative rhomboid protease YdcA (ydcA) from Bacillus subtilis (strain 168).